Consider the following 1349-residue polypeptide: ABC multidrug transporter mdr1 (1349 aa).

The disordered stretch occupies residues 1–62 (MPAPETGASS…PDGKQKDHGK (62 aa)). Over residues 35–45 (DNEKPHDHHSL) the composition is skewed to basic and acidic residues. 4 consecutive transmembrane segments (helical) span residues 108 to 128 (ILII…LPLF), 162 to 182 (YFVY…VGFI), 234 to 254 (KVGL…VAYV), and 257 to 277 (WKLA…MGGG). The ABC transmembrane type-1 1 domain occupies 112 to 402 (LVSAICAIAA…VAPNGQAFTN (291 aa)). N-linked (GlcNAc...) asparagine glycosylation occurs at asparagine 308. 2 helical membrane passes run 339 to 359 (ILGM…GLGF) and 371 to 391 (VNVG…FSLG). The ABC transporter 1 domain maps to 437-682 (IEFRNVKHIY…KGTYYKLVEA (246 aa)). 472–479 (GPSGSGKS) is a binding site for ATP. Transmembrane regions (helical) follow at residues 779 to 799 (MLIG…QAFL) and 828 to 848 (FFVV…AFAI). One can recognise an ABC transmembrane type-1 2 domain in the interval 780–1069 (LIGLTFSFLA…VFSFAPDMGK (290 aa)). 2 N-linked (GlcNAc...) asparagine glycosylation sites follow: asparagine 878 and asparagine 893. The next 4 helical transmembrane spans lie at 896–916 (GVSG…GAAM), 926–948 (LALV…FYML), 1016–1036 (ALVF…LGHH), and 1043–1063 (FFVC…VFSF). One can recognise an ABC transporter 2 domain in the interval 1104–1342 (IEFRDVHFRY…KGRYYELVNL (239 aa)). N-linked (GlcNAc...) asparagine glycosylation occurs at asparagine 1126. 1139–1146 (GPSGCGKS) is a binding site for ATP.

This sequence belongs to the ABC transporter superfamily. ABCB family. Multidrug resistance exporter (TC 3.A.1.201) subfamily.

The protein resides in the cell membrane. The catalysed reaction is voriconazole(in) + ATP + H2O = voriconazole(out) + ADP + phosphate + H(+). Its function is as follows. Pleiotropic ABC efflux transporter that may be involved in A.fumigatus adaptation to azoles such as vorizonazole. The chain is ABC multidrug transporter mdr1 from Aspergillus fumigatus (strain ATCC MYA-4609 / CBS 101355 / FGSC A1100 / Af293) (Neosartorya fumigata).